The following is a 187-amino-acid chain: Adenylate kinase (187 aa).

10 to 15 (GSGKGT) is an ATP binding site. The tract at residues 30–59 (STGDMLRAEIAAGTELGKQAKTVMDAGNLV) is NMP. AMP is bound by residues T31, R36, 57–59 (NLV), 85–88 (GYPR), and Q92. An LID region spans residues 126–136 (GRAKEQGRADD). Residue R127 participates in ATP binding. AMP contacts are provided by R133 and R144. ATP is bound at residue G172.

The protein belongs to the adenylate kinase family. In terms of assembly, monomer.

Its subcellular location is the cytoplasm. The catalysed reaction is AMP + ATP = 2 ADP. The protein operates within purine metabolism; AMP biosynthesis via salvage pathway; AMP from ADP: step 1/1. In terms of biological role, catalyzes the reversible transfer of the terminal phosphate group between ATP and AMP. Plays an important role in cellular energy homeostasis and in adenine nucleotide metabolism. This Stenotrophomonas maltophilia (strain K279a) protein is Adenylate kinase.